The chain runs to 1274 residues: DENN domain-containing protein 3 (1274 aa).

The segment at 65–108 is disordered; that stretch reads GQVPGASCALGKGRRRSFRKKREKPRMEPWKSHPGDSKGPDSED. The region spanning 75 to 245 is the uDENN domain; the sequence is GKGRRRSFRK…LIPSPPPGPL (171 aa). Over residues 76-88 the composition is skewed to basic residues; the sequence is KGRRRSFRKKREK. The span at 89–105 shows a compositional bias: basic and acidic residues; the sequence is PRMEPWKSHPGDSKGPD. Residues 268 to 400 form the cDENN domain; the sequence is IVDLDLHLPL…PLLLAQTFIQ (133 aa). One can recognise a dDENN domain in the interval 402-506; sequence VQSLQLHPDL…KARLNGRMDA (105 aa). Residues 520–970 form a linker region; the sequence is RIDRMLISPR…KHKINPSAGE (451 aa). Phosphoserine; by ULK1 occurs at positions 554 and 572. Position 940 is a phosphotyrosine (Tyr-940). WD repeat units follow at residues 975–1013, 1019–1055, 1059–1099, 1103–1140, 1146–1181, 1186–1228, and 1234–1273; these read AIEVLLYTPGRLDPAEKVEDAHPKLWCALNEGKVVVFDA, HQHCFKVGSSKVNCMVMAEHNQVWVGSEDSVIYIINV, SCNK…AWNV, RVISRFQLSYGDLLSISLHNDRIWCCTVHKILVVTPQG, LKHPKDASFLAFQLLPEEQQLWAASTGVSELYMWSL, QPPQ…IYVM, and TVEKELVAHLDTVRTLCSAEDRYVLSGAGQEEGKIAIWKV.

Forms oligomers. Interacts with 6 of the 7 known isoforms of 14-3-3 proteins.

It localises to the cytoplasm. Guanine nucleotide exchange factor (GEF) activating Rab12. Promotes the exchange of GDP to GTP, converting inactive GDP-bound Rab12 into its active GTP-bound form. Regulates autophagy in response to starvation through Rab12 activation. Starvation leads to ULK1/2-dependent phosphorylation of Ser-554 and Ser-572, which in turn allows recruitment of 14-3-3 adapter proteins and leads to up-regulation of GEF activity towards Rab12. Also plays a role in protein transport from recycling endosomes to lysosomes, regulating, for instance, the degradation of the transferrin receptor and of the amino acid transporter PAT4. Starvation also induces phosphorylation at Tyr-940, which leads to up-regulated GEF activity and initiates autophagy. The sequence is that of DENN domain-containing protein 3 (Dennd3) from Mus musculus (Mouse).